The primary structure comprises 335 residues: Olfactory receptor 9K2 (335 aa).

The Extracellular portion of the chain corresponds to 1 to 50 (MLGSKPRVHLYILPCASQQVSTMGDRGTSNHSEMTDFILAGFRVRPELHI). N-linked (GlcNAc...) asparagine glycosylation occurs at N30. Residues 51–71 (LLFLLFLFVYAMILLGNVGMM) traverse the membrane as a helical segment. The Cytoplasmic portion of the chain corresponds to 72–79 (TIIMTDPR). A helical membrane pass occupies residues 80–100 (LNTPMYFFLGNLSFIDLFYSS). Residues 101 to 124 (VIEPKAMINFWSENKSISFAGCVA) are Extracellular-facing. N114 carries an N-linked (GlcNAc...) asparagine glycan. The cysteines at positions 122 and 214 are disulfide-linked. A helical transmembrane segment spans residues 125–145 (QLFLFALLIVTEGFLLAAMAY). The Cytoplasmic segment spans residues 146–164 (DRFIAICNPLLYSVQMSTR). A helical transmembrane segment spans residues 165–185 (LCTQLVAGSYFCGCISSVIQT). Residues 186-222 (SMTFTLSFCASRAVDHFYCDSRPLQRLSCSDLFIHRM) lie on the Extracellular side of the membrane. The helical transmembrane segment at 223–242 (ISFSLSCIIILPTIIVIIVS) threads the bilayer. At 243–262 (YMYIVSTVLKIHSTEGHKKA) the chain is on the cytoplasmic side. The helical transmembrane segment at 263–283 (FSTCSSHLGVVSVLYGAVFFM) threads the bilayer. Topologically, residues 284–296 (YLTPDRFPELSKV) are extracellular. Over 316 to 335 (RNKDVQEALKKFLEKKNIIL) the chain is Cytoplasmic.

The protein belongs to the G-protein coupled receptor 1 family.

The protein resides in the cell membrane. Odorant receptor. This Homo sapiens (Human) protein is Olfactory receptor 9K2 (OR9K2).